A 360-amino-acid chain; its full sequence is Glycerol-1-phosphate dehydrogenase [NAD(P)+] (360 aa).

Residues 108–112 (GRVID) and 130–133 (TAAS) each bind NAD(+). Position 135 (D135) interacts with substrate. S139 provides a ligand contact to NAD(+). D182 is a substrate binding site. The Zn(2+) site is built by D182 and H262. A substrate-binding site is contributed by H266. H278 serves as a coordination point for Zn(2+).

It belongs to the glycerol-1-phosphate dehydrogenase family. Requires Zn(2+) as cofactor.

The protein localises to the cytoplasm. The enzyme catalyses sn-glycerol 1-phosphate + NAD(+) = dihydroxyacetone phosphate + NADH + H(+). The catalysed reaction is sn-glycerol 1-phosphate + NADP(+) = dihydroxyacetone phosphate + NADPH + H(+). Its pathway is membrane lipid metabolism; glycerophospholipid metabolism. Its function is as follows. Catalyzes the NAD(P)H-dependent reduction of dihydroxyacetonephosphate (DHAP or glycerone phosphate) to glycerol 1-phosphate (G1P). The G1P thus generated is used as the glycerophosphate backbone of phospholipids in the cellular membranes of Archaea. The polypeptide is Glycerol-1-phosphate dehydrogenase [NAD(P)+] (Methanocorpusculum labreanum (strain ATCC 43576 / DSM 4855 / Z)).